A 164-amino-acid polypeptide reads, in one-letter code: Xanthine-guanine phosphoribosyltransferase (164 aa).

Residues 41–42 (RG) and 98–106 (DDLTDTGKT) each bind 5-phospho-alpha-D-ribose 1-diphosphate. Aspartate 99 provides a ligand contact to Mg(2+). Residues aspartate 102 and isoleucine 145 each contribute to the guanine site. Positions 102 and 145 each coordinate xanthine. Residues 102–106 (DTGKT) and 144–145 (WI) each bind GMP.

Belongs to the purine/pyrimidine phosphoribosyltransferase family. XGPT subfamily. As to quaternary structure, homotetramer. Requires Mg(2+) as cofactor.

Its subcellular location is the cell inner membrane. The enzyme catalyses GMP + diphosphate = guanine + 5-phospho-alpha-D-ribose 1-diphosphate. It catalyses the reaction XMP + diphosphate = xanthine + 5-phospho-alpha-D-ribose 1-diphosphate. It carries out the reaction IMP + diphosphate = hypoxanthine + 5-phospho-alpha-D-ribose 1-diphosphate. Its pathway is purine metabolism; GMP biosynthesis via salvage pathway; GMP from guanine: step 1/1. The protein operates within purine metabolism; XMP biosynthesis via salvage pathway; XMP from xanthine: step 1/1. Its function is as follows. Purine salvage pathway enzyme that catalyzes the transfer of the ribosyl-5-phosphate group from 5-phospho-alpha-D-ribose 1-diphosphate (PRPP) to the N9 position of the 6-oxopurines guanine and xanthine to form the corresponding ribonucleotides GMP (guanosine 5'-monophosphate) and XMP (xanthosine 5'-monophosphate), with the release of PPi. To a lesser extent, also acts on hypoxanthine. The chain is Xanthine-guanine phosphoribosyltransferase from Rhizobium johnstonii (strain DSM 114642 / LMG 32736 / 3841) (Rhizobium leguminosarum bv. viciae).